We begin with the raw amino-acid sequence, 1838 residues long: Nuclear pore complex protein NUP205 (1838 aa).

The protein belongs to the NUP186/NUP192/NUP205 family. Part of the nuclear pore complex (NPC). The NPC has an eight-fold symmetrical structure comprising a central transport channel and two rings, the cytoplasmic and nuclear rings, to which eight filaments are attached. The cytoplasmic filaments have loose ends, while the nuclear filaments are joined in a distal ring, forming a nuclear basket. NPCs are highly dynamic in configuration and composition, and can be devided in 3 subcomplexes, the NUP62 subcomplex, the NUP107-160 subcomplex and the NUP93 subcomplex, containing approximately 30 different nucleoporin proteins.

Its subcellular location is the nucleus envelope. The protein localises to the nucleus. It localises to the nuclear pore complex. The chain is Nuclear pore complex protein NUP205 from Arabidopsis thaliana (Mouse-ear cress).